The sequence spans 352 residues: Glycerol-1-phosphate dehydrogenase [NAD(P)+] (352 aa).

Residues 98-102 (GKAID) and 120-123 (TAAS) contribute to the NAD(+) site. Residue Asp125 participates in substrate binding. Ser129 contributes to the NAD(+) binding site. Asp172 is a substrate binding site. Residues Asp172 and His252 each coordinate Zn(2+). His256 is a binding site for substrate. Position 268 (His268) interacts with Zn(2+).

This sequence belongs to the glycerol-1-phosphate dehydrogenase family. It depends on Zn(2+) as a cofactor.

It localises to the cytoplasm. It catalyses the reaction sn-glycerol 1-phosphate + NAD(+) = dihydroxyacetone phosphate + NADH + H(+). It carries out the reaction sn-glycerol 1-phosphate + NADP(+) = dihydroxyacetone phosphate + NADPH + H(+). Its pathway is membrane lipid metabolism; glycerophospholipid metabolism. Functionally, catalyzes the NAD(P)H-dependent reduction of dihydroxyacetonephosphate (DHAP or glycerone phosphate) to glycerol 1-phosphate (G1P). The G1P thus generated is used as the glycerophosphate backbone of phospholipids in the cellular membranes of Archaea. The sequence is that of Glycerol-1-phosphate dehydrogenase [NAD(P)+] from Halobacterium salinarum (strain ATCC 29341 / DSM 671 / R1).